Reading from the N-terminus, the 55-residue chain is Photosystem II reaction center protein K (55 aa).

Residues 1-18 (MFNIYLENAFYLNGITFA) constitute a propeptide that is removed on maturation. A helical transmembrane segment spans residues 26-46 (IFDPIVDVMPIIPLFFFLLAF).

This sequence belongs to the PsbK family. In terms of assembly, PSII is composed of 1 copy each of membrane proteins PsbA, PsbB, PsbC, PsbD, PsbE, PsbF, PsbH, PsbI, PsbJ, PsbK, PsbL, PsbM, PsbT, PsbX, PsbY, PsbZ, Psb30/Ycf12, at least 3 peripheral proteins of the oxygen-evolving complex and a large number of cofactors. It forms dimeric complexes.

Its subcellular location is the plastid. It localises to the chloroplast thylakoid membrane. In terms of biological role, one of the components of the core complex of photosystem II (PSII). PSII is a light-driven water:plastoquinone oxidoreductase that uses light energy to abstract electrons from H(2)O, generating O(2) and a proton gradient subsequently used for ATP formation. It consists of a core antenna complex that captures photons, and an electron transfer chain that converts photonic excitation into a charge separation. The sequence is that of Photosystem II reaction center protein K from Marchantia polymorpha (Common liverwort).